Reading from the N-terminus, the 504-residue chain is ATP synthase subunit alpha 2 (504 aa).

Residue 169-176 participates in ATP binding; it reads GDRQTGKT.

The protein belongs to the ATPase alpha/beta chains family. F-type ATPases have 2 components, CF(1) - the catalytic core - and CF(0) - the membrane proton channel. CF(1) has five subunits: alpha(3), beta(3), gamma(1), delta(1), epsilon(1). CF(0) has three main subunits: a(1), b(2) and c(9-12). The alpha and beta chains form an alternating ring which encloses part of the gamma chain. CF(1) is attached to CF(0) by a central stalk formed by the gamma and epsilon chains, while a peripheral stalk is formed by the delta and b chains.

The protein localises to the cell membrane. The enzyme catalyses ATP + H2O + 4 H(+)(in) = ADP + phosphate + 5 H(+)(out). Produces ATP from ADP in the presence of a proton gradient across the membrane. The alpha chain is a regulatory subunit. The chain is ATP synthase subunit alpha 2 from Listeria monocytogenes serotype 4b (strain F2365).